Consider the following 514-residue polypeptide: Endogenous retrovirus group PABLB member 1 Env polyprotein (514 aa).

N-linked (GlcNAc...) asparagine glycosylation occurs at N58. A surface protein region spans residues 60-316 (STSNVFLQWA…YPYLPHVVNQ (257 aa)). Residues 82 to 85 (CWVC) carry the CXXC motif. N-linked (GlcNAc...) asparagine glycosylation is found at N133, N140, N155, N218, N226, and N267. The interval 317-514 (GTRAIVHRND…QRDIFHSNAP (198 aa)) is transmembrane protein. The interval 328–348 (LPTIFMPSVGLGTVIQHIEAL) is fusion peptide. Residues N350 and N357 are each glycosylated (N-linked (GlcNAc...) asparagine). Residues 378-394 (LQNRMALDILTAAEGGT) carry the CKS-17 motif. Residues C395 and C402 are joined by a disulfide bond. A CX6CC motif is present at residues 395–403 (CALIKTECC). N-linked (GlcNAc...) asparagine glycosylation is found at N408 and N412. A helical membrane pass occupies residues 452-472 (ILIVLATLWSVGIALCCGLYF).

It belongs to the gamma type-C retroviral envelope protein family. HERV class-I R(b) env subfamily. Post-translationally, the CXXC motif is highly conserved across a broad range of retroviral envelope proteins. It is thought to participate in the formation of a labile disulfide bond possibly with the CX6CC motif present in the transmembrane domain. In terms of tissue distribution, low expression in placenta and testis.

The protein resides in the cell membrane. Retroviral envelope proteins mediate receptor recognition and membrane fusion during early infection. Endogenous envelope proteins may have kept, lost or modified their original function during evolution. This endogenous envelope protein has lost its original fusogenic properties. In Homo sapiens (Human), this protein is Endogenous retrovirus group PABLB member 1 Env polyprotein (ERVPABLB-1).